Consider the following 548-residue polypeptide: Beta-lactamase-like protein 2 (548 aa).

The first 24 residues, 1 to 24, serve as a signal peptide directing secretion; that stretch reads MKIMNKQSITIFLIICFLINLILS. Asn-237, Asn-258, Asn-443, and Asn-459 each carry an N-linked (GlcNAc...) asparagine glycan.

It belongs to the beta-lactamase family.

The protein localises to the secreted. This chain is Beta-lactamase-like protein 2, found in Dictyostelium discoideum (Social amoeba).